The following is a 149-amino-acid chain: D-aminoacyl-tRNA deacylase (149 aa).

Positions 137–138 match the Gly-cisPro motif, important for rejection of L-amino acids motif; the sequence is GP.

The protein belongs to the DTD family. In terms of assembly, homodimer.

It localises to the cytoplasm. The catalysed reaction is glycyl-tRNA(Ala) + H2O = tRNA(Ala) + glycine + H(+). The enzyme catalyses a D-aminoacyl-tRNA + H2O = a tRNA + a D-alpha-amino acid + H(+). Functionally, an aminoacyl-tRNA editing enzyme that deacylates mischarged D-aminoacyl-tRNAs. Also deacylates mischarged glycyl-tRNA(Ala), protecting cells against glycine mischarging by AlaRS. Acts via tRNA-based rather than protein-based catalysis; rejects L-amino acids rather than detecting D-amino acids in the active site. By recycling D-aminoacyl-tRNA to D-amino acids and free tRNA molecules, this enzyme counteracts the toxicity associated with the formation of D-aminoacyl-tRNA entities in vivo and helps enforce protein L-homochirality. This Geobacter sp. (strain M21) protein is D-aminoacyl-tRNA deacylase.